Consider the following 227-residue polypeptide: Ribonuclease 3 (227 aa).

One can recognise an RNase III domain in the interval 6 to 128 (ASDYQQRIGY…VIAAIYLDAD (123 aa)). Residue glutamate 41 participates in Mg(2+) binding. Residue aspartate 45 is part of the active site. Mg(2+)-binding residues include aspartate 114 and glutamate 117. Residue glutamate 117 is part of the active site. One can recognise a DRBM domain in the interval 155 to 225 (DPKTRLQEWL…ASHAINQLDS (71 aa)). A compositionally biased stretch (basic and acidic residues) spans 203-212 (GEGSSRRLAE). The tract at residues 203 to 227 (GEGSSRRLAEQDAASHAINQLDSNK) is disordered.

Belongs to the ribonuclease III family. Homodimer. Mg(2+) is required as a cofactor.

The protein resides in the cytoplasm. It carries out the reaction Endonucleolytic cleavage to 5'-phosphomonoester.. Functionally, digests double-stranded RNA. Involved in the processing of primary rRNA transcript to yield the immediate precursors to the large and small rRNAs (23S and 16S). Processes some mRNAs, and tRNAs when they are encoded in the rRNA operon. Processes pre-crRNA and tracrRNA of type II CRISPR loci if present in the organism. This chain is Ribonuclease 3, found in Xylella fastidiosa (strain M12).